Here is a 66-residue protein sequence, read N- to C-terminus: Large ribosomal subunit protein bL33c (66 aa).

The protein belongs to the bacterial ribosomal protein bL33 family.

It is found in the plastid. It localises to the chloroplast. In Brachypodium distachyon (Purple false brome), this protein is Large ribosomal subunit protein bL33c.